A 455-amino-acid chain; its full sequence is Argininosuccinate lyase (455 aa).

Belongs to the lyase 1 family. Argininosuccinate lyase subfamily.

It localises to the cytoplasm. The catalysed reaction is 2-(N(omega)-L-arginino)succinate = fumarate + L-arginine. The protein operates within amino-acid biosynthesis; L-arginine biosynthesis; L-arginine from L-ornithine and carbamoyl phosphate: step 3/3. The protein is Argininosuccinate lyase of Shewanella halifaxensis (strain HAW-EB4).